Consider the following 322-residue polypeptide: Epiphycan (322 aa).

Positions 1 to 19 are cleaved as a signal peptide; the sequence is MKTLAGLVLGLVIFDAAVT. The O-linked (GalNAc...) threonine glycan is linked to threonine 60. The O-linked (Xyl...) (dermatan sulfate) serine glycan is linked to serine 64. The interval 64–101 is disordered; that stretch reads SGNRELLTPPPQPEKAQEEEEEEESTPRLIDGSSPQEP. Serine 96 is a glycosylation site (O-linked (GalNAc...) serine). The 38-residue stretch at 106–143 folds into the LRRNT domain; sequence VLGPHTNEDFPTCLLCTCISTTVYCDDHELDAIPPLPK. Cysteine 118 and cysteine 130 form a disulfide bridge. LRR repeat units follow at residues 144-165, 168-189, 192-213, 238-258, and 259-280; these read NTAY…DFAS, DLKR…AFRK, QLRE…PTTL, DLHH…PLPE, and NLRA…TFCN. The cysteines at positions 279 and 312 are disulfide-linked. Asparagine 283 and asparagine 302 each carry an N-linked (GlcNAc...) asparagine glycan. An LRR 6 repeat occupies 290 to 310; it reads ALEDIRLDGNPINLSKTPQAY.

It belongs to the small leucine-rich proteoglycan (SLRP) family. SLRP class III subfamily. Post-translationally, the O-linked polysaccharides on Thr-60 and Ser-96 are probably the mucin type linked to GalNAc. There is one glycosaminoglycan chain, known to be dermatan sulfate, and it is probably the O-glycosylation at Ser-64. As to expression, cartilage, ligament, and placenta.

It is found in the secreted. The protein localises to the extracellular space. It localises to the extracellular matrix. In terms of biological role, may have a role in bone formation and also in establishing the ordered structure of cartilage through matrix organization. This is Epiphycan (EPYC) from Homo sapiens (Human).